The primary structure comprises 71 residues: Small ribosomal subunit protein bS21 (71 aa).

Residues 50–59 are compositionally biased toward basic residues; it reads AAAVKRHAKK. Residues 50–71 form a disordered region; the sequence is AAAVKRHAKKVQREQRRAVRLY. Basic and acidic residues predominate over residues 60–71; the sequence is VQREQRRAVRLY.

It belongs to the bacterial ribosomal protein bS21 family.

The chain is Small ribosomal subunit protein bS21 from Pseudomonas fluorescens (strain ATCC BAA-477 / NRRL B-23932 / Pf-5).